Consider the following 227-residue polypeptide: MGQKVHPKGFRIGIIRDWDSNWYADRDYSELLHEDVKLRKFIKDRFYAAGISKVEIQRTGNRIRVTIHTAKPGIIIGRGGIEVERLKVNLAEMTKKNVNINIQEIRRPEMDAQIVAENVAQQLEKRISFRRAMKQTVGRTMRSGGIGIKIAISGRLGGAEIARTEWYAEGKVPLHTLRADIDYGFAEANTTYGKIGIKVWINRGEILPEAKQRPKEPKQKEMEEAGR.

The 69-residue stretch at 38 to 106 folds into the KH type-2 domain; it reads LRKFIKDRFY…NVNINIQEIR (69 aa).

The protein belongs to the universal ribosomal protein uS3 family. Part of the 30S ribosomal subunit. Forms a tight complex with proteins S10 and S14.

Functionally, binds the lower part of the 30S subunit head. Binds mRNA in the 70S ribosome, positioning it for translation. The polypeptide is Small ribosomal subunit protein uS3 (Syntrophomonas wolfei subsp. wolfei (strain DSM 2245B / Goettingen)).